A 562-amino-acid chain; its full sequence is NAD-dependent malic enzyme (562 aa).

Tyr-101 (proton donor) is an active-site residue. NAD(+) is bound at residue Arg-154. Lys-172 functions as the Proton acceptor in the catalytic mechanism. Residues Glu-243, Asp-244, and Asp-267 each coordinate a divalent metal cation. NAD(+) contacts are provided by Asp-267 and Asn-415.

This sequence belongs to the malic enzymes family. As to quaternary structure, homotetramer. Mg(2+) is required as a cofactor. Mn(2+) serves as cofactor.

The enzyme catalyses (S)-malate + NAD(+) = pyruvate + CO2 + NADH. The catalysed reaction is oxaloacetate + H(+) = pyruvate + CO2. This chain is NAD-dependent malic enzyme, found in Vibrio campbellii (strain ATCC BAA-1116).